A 513-amino-acid polypeptide reads, in one-letter code: Nitrate transporter 2.2 (513 aa).

The next 12 helical transmembrane spans lie at 38 to 58, 74 to 94, 98 to 118, 128 to 148, 158 to 178, 196 to 216, 247 to 265, 281 to 301, 323 to 343, 351 to 371, 383 to 403, and 419 to 439; these read WICFFMSFVATFAPASLAPVI, VSAVCGAIAARLFMGIFVDVV, YGAAAAMLMTAPAVFCMALVT, FFIGLSLCMFVCCQFWCGTMF, AIAAGWGNMGGGACHFIMPLI, AFFVPGGIYIVTATLTLLLGI, LGNYRSWILALTYGYSFGV, FGLNLAVAGALGAIFGLMNIF, LWVLWITQTLGGIFCIIMGKV, IVIMIIFSIFCQQACGMHFGI, VSGLVGAGGNVGAAITQAIWF, and FVWMGVQAVALTVAVMFIWFP.

Belongs to the major facilitator superfamily. Nitrate/nitrite porter (TC 2.A.1.8) family.

It localises to the cell membrane. Involved in nitrate transport, but does not seem to be able to mediate transport by its own. Acts as a dual component transporter with NAR2 (system 2). Involved in a high affinity transport specific for nitrate. The chain is Nitrate transporter 2.2 from Chlamydomonas reinhardtii (Chlamydomonas smithii).